Reading from the N-terminus, the 231-residue chain is tRNA (guanine-N(1)-)-methyltransferase (231 aa).

S-adenosyl-L-methionine contacts are provided by residues G112 and L132–L137.

It belongs to the RNA methyltransferase TrmD family. In terms of assembly, homodimer.

The protein resides in the cytoplasm. It catalyses the reaction guanosine(37) in tRNA + S-adenosyl-L-methionine = N(1)-methylguanosine(37) in tRNA + S-adenosyl-L-homocysteine + H(+). Functionally, specifically methylates guanosine-37 in various tRNAs. This is tRNA (guanine-N(1)-)-methyltransferase from Microcystis aeruginosa (strain NIES-843 / IAM M-2473).